Reading from the N-terminus, the 267-residue chain is MLSHAELKQGFHYFMMGWHLITQKGLRRFVIMPILLNIVLLSGLFWLFITQIEKMIGMLMLSIPDWLSWLSSILLIFAILMILVLFYFVFTTLSGFIAAPFNGLLAEKVEKMLTGENLVEGSVWDFMKDIPRMLGREWQKLVYSLPKLIILFLLGFVPVLGQSVIPIIVTLFTAWMMAIQYCDYPFDNHKVPFFVMKAELAEKRALSLSFGGLVMLCTFIPLVNLVVIPVAVCGATAMWVTHFRDHLAMKPLNQEGVSRVSTVSIVK.

4 helical membrane passes run Phe29–Ile49, Ile73–Leu93, Ile149–Val169, and Gly212–Val232.

Belongs to the CysZ family.

It is found in the cell inner membrane. Functionally, high affinity, high specificity proton-dependent sulfate transporter, which mediates sulfate uptake. Provides the sulfur source for the cysteine synthesis pathway. The sequence is that of Sulfate transporter CysZ from Pasteurella multocida (strain Pm70).